A 99-amino-acid polypeptide reads, in one-letter code: Small integral membrane protein 14 (99 aa).

The Lumenal segment spans residues Met-1–Asn-49. Residues Gly-50–Leu-70 traverse the membrane as a helical segment. Residues Arg-71–Asp-99 are Cytoplasmic-facing. Residues Gly-77–Asp-99 form a disordered region.

The protein resides in the endoplasmic reticulum membrane. The protein is Small integral membrane protein 14 (SMIM14) of Pongo abelii (Sumatran orangutan).